The sequence spans 170 residues: Ribosome maturation factor RimM (170 aa).

Positions 97 to 170 constitute a PRC barrel domain; it reads KPDEYYWVDL…LVVVDWDPEF (74 aa).

It belongs to the RimM family. Binds ribosomal protein uS19.

It is found in the cytoplasm. In terms of biological role, an accessory protein needed during the final step in the assembly of 30S ribosomal subunit, possibly for assembly of the head region. Essential for efficient processing of 16S rRNA. May be needed both before and after RbfA during the maturation of 16S rRNA. It has affinity for free ribosomal 30S subunits but not for 70S ribosomes. The sequence is that of Ribosome maturation factor RimM from Stenotrophomonas maltophilia (strain K279a).